A 466-amino-acid polypeptide reads, in one-letter code: DNA polymerase delta subunit 3 (466 aa).

At Ala-2 the chain carries N-acetylalanine. Disordered stretches follow at residues 145-218 (PAES…KEVM) and 255-466 (EQEV…FQRK). Composition is skewed to basic and acidic residues over residues 205–218 (DANK…KEVM), 255–265 (EQEVKEEKKVE), and 281–297 (DLKK…MQQK). Lys-259 participates in a covalent cross-link: Glycyl lysine isopeptide (Lys-Gly) (interchain with G-Cter in SUMO); alternate. Residue Lys-259 forms a Glycyl lysine isopeptide (Lys-Gly) (interchain with G-Cter in SUMO2); alternate linkage. Lys-262 is covalently cross-linked (Glycyl lysine isopeptide (Lys-Gly) (interchain with G-Cter in SUMO2)). Ser-308 carries the phosphoserine modification. Over residues 350 to 360 (PSPPPPSPSPE) the composition is skewed to pro residues. Ser-407 and Ser-409 each carry phosphoserine. Thr-411 is subject to Phosphothreonine. Ser-413 carries the phosphoserine modification. The segment covering 432–441 (VKKEPKEERK) has biased composition (basic and acidic residues). A Glycyl lysine isopeptide (Lys-Gly) (interchain with G-Cter in SUMO); alternate cross-link involves residue Lys-433. A Glycyl lysine isopeptide (Lys-Gly) (interchain with G-Cter in SUMO2); alternate cross-link involves residue Lys-433. The PIP-box motif lies at 456-463 (QVAITGFF).

In terms of assembly, component of both the DNA polymerase delta and DNA polymerase zeta complexes. The tetrameric DNA polymerase delta complex (Pol-delta4), which consists of POLD1/p125, POLD2/p50, POLD3/p66/p68 and POLD4/p12, with POLD1 bearing DNA polymerase and 3' to 5' proofreading exonuclease activities. Within this complex, directly interacts with POLD2. Following stress caused by DNA damaging agents or by replication stress, POLD4 is degraded and Pol-delta4 is converted into a trimeric form of the complex (Pol-delta3), which consists of POLD1, POLD2 and POLD3. Pol-delta3 is the major form occurring at S phase replication sites, as well as DNA damage sites. Directly interacts with PCNA, as do POLD1 and POLD4; this interaction stimulates Pol-delta polymerase activity. Component of the DNA polymerase zeta complex (POLZ), which consists of REV3L, MAD2L2, POLD2 and POLD3, with REV3L bearing DNA polymerase catalytic activity. The DNA polymerase delta complex interacts with POLDIP2; this interaction is probably mediated through direct binding to POLD2. In terms of processing, ubiquitinated, but not targeted to the proteasome. Sumoylated. Sumoylation by SUMO3 may be predominant.

It is found in the cytoplasm. It localises to the nucleus. Functionally, accessory component of both the DNA polymerase delta complex and the DNA polymerase zeta complex. As a component of the trimeric and tetrameric DNA polymerase delta complexes (Pol-delta3 and Pol-delta4, respectively), plays a role in high fidelity genome replication, including in lagging strand synthesis, and repair. Required for optimal Pol-delta activity. Stabilizes the Pol-delta complex and plays a major role in Pol-delta stimulation by PCNA. Pol-delta3 and Pol-delta4 are characterized by the absence or the presence of POLD4. They exhibit differences in catalytic activity. Most notably, Pol-delta3 shows higher proofreading activity than Pol-delta4. Although both Pol-delta3 and Pol-delta4 process Okazaki fragments in vitro, Pol-delta3 may also be better suited to fulfill this task, exhibiting near-absence of strand displacement activity compared to Pol-delta4 and stalling on encounter with the 5'-blocking oligonucleotides. Pol-delta3 idling process may avoid the formation of a gap, while maintaining a nick that can be readily ligated. Along with DNA polymerase kappa, DNA polymerase delta carries out approximately half of nucleotide excision repair (NER) synthesis following UV irradiation. In this context, POLD3, along with PCNA and RFC1-replication factor C complex, is required to recruit POLD1, the catalytic subunit of the polymerase delta complex, to DNA damage sites. Under conditions of DNA replication stress, required for the repair of broken replication forks through break-induced replication (BIR). Involved in the translesion synthesis (TLS) of templates carrying O6-methylguanine or abasic sites performed by Pol-delta4, independently of DNA polymerase zeta (REV3L) or eta (POLH). Facilitates abasic site bypass by DNA polymerase delta by promoting extension from the nucleotide inserted opposite the lesion. Also involved in TLS, as a component of the tetrameric DNA polymerase zeta complex. Along with POLD2, dramatically increases the efficiency and processivity of DNA synthesis of the DNA polymerase zeta complex compared to the minimal zeta complex, consisting of only REV3L and REV7. This chain is DNA polymerase delta subunit 3 (POLD3), found in Bos taurus (Bovine).